Reading from the N-terminus, the 659-residue chain is Chaperone protein DnaK (659 aa).

Residue threonine 201 is modified to Phosphothreonine; by autocatalysis. Residues 571-592 show a composition bias toward basic and acidic residues; that stretch reads RSALKEDAPTEKIKEASDELSR. Residues 571–659 are disordered; it reads RSALKEDAPT…DVEIVDKPND (89 aa). Positions 600-613 are enriched in low complexity; the sequence is AMQSQSASAAANAQ.

This sequence belongs to the heat shock protein 70 family.

Acts as a chaperone. This is Chaperone protein DnaK from Chlamydia abortus (strain DSM 27085 / S26/3) (Chlamydophila abortus).